A 314-amino-acid polypeptide reads, in one-letter code: Dihydroorotate dehydrogenase (fumarate) (314 aa).

Residues Lys46, 70 to 74 (NSMGL), and Asn130 contribute to the substrate site. FMN is bound at residue 46–47 (KS). Asn130 serves as a coordination point for FMN. Active-site nucleophile residues include Ser132 and Cys133. The FMN site is built by Lys167 and Ile195. Position 196–197 (196–197 (NS)) interacts with substrate. FMN is bound by residues Gly224, 252–253 (GG), and 274–275 (GT).

It belongs to the dihydroorotate dehydrogenase family. Type 1 subfamily. In terms of assembly, homodimer. FMN is required as a cofactor.

The protein resides in the cytoplasm. It catalyses the reaction (S)-dihydroorotate + fumarate = orotate + succinate. It participates in pyrimidine metabolism; UMP biosynthesis via de novo pathway. Its activity is regulated as follows. The activity is independent of the presence of oxygen. Functionally, catalyzes the conversion of dihydroorotate to orotate with fumarate as the electron acceptor. The polypeptide is Dihydroorotate dehydrogenase (fumarate) (URA1) (Lachancea kluyveri (strain ATCC 58438 / CBS 3082 / BCRC 21498 / NBRC 1685 / JCM 7257 / NCYC 543 / NRRL Y-12651) (Yeast)).